A 477-amino-acid polypeptide reads, in one-letter code: V-type ATP synthase beta chain (477 aa).

This sequence belongs to the ATPase alpha/beta chains family.

In terms of biological role, produces ATP from ADP in the presence of a proton gradient across the membrane. The V-type beta chain is a regulatory subunit. The sequence is that of V-type ATP synthase beta chain from Anaeromyxobacter dehalogenans (strain 2CP-1 / ATCC BAA-258).